Consider the following 628-residue polypeptide: Phosphomethylpyrimidine synthase (628 aa).

Residues 1-14 (MTISDIGSQATTHT) are compositionally biased toward polar residues. Positions 1-37 (MTISDIGSQATTHTPVKASKADALKTPAHRSETDARF) are disordered. Residues 19 to 37 (SKADALKTPAHRSETDARF) show a composition bias toward basic and acidic residues. Substrate contacts are provided by residues N260, M289, Y318, H354, 374–376 (SRG), 415–418 (DGLR), and E454. H458 provides a ligand contact to Zn(2+). A substrate-binding site is contributed by Y481. H522 provides a ligand contact to Zn(2+). Residues C602, C605, and C610 each coordinate [4Fe-4S] cluster.

The protein belongs to the ThiC family. In terms of assembly, homodimer. Requires [4Fe-4S] cluster as cofactor.

It catalyses the reaction 5-amino-1-(5-phospho-beta-D-ribosyl)imidazole + S-adenosyl-L-methionine = 4-amino-2-methyl-5-(phosphooxymethyl)pyrimidine + CO + 5'-deoxyadenosine + formate + L-methionine + 3 H(+). It participates in cofactor biosynthesis; thiamine diphosphate biosynthesis. In terms of biological role, catalyzes the synthesis of the hydroxymethylpyrimidine phosphate (HMP-P) moiety of thiamine from aminoimidazole ribotide (AIR) in a radical S-adenosyl-L-methionine (SAM)-dependent reaction. This is Phosphomethylpyrimidine synthase from Psychrobacter cryohalolentis (strain ATCC BAA-1226 / DSM 17306 / VKM B-2378 / K5).